A 276-amino-acid chain; its full sequence is Octanoyltransferase LipM (276 aa).

In terms of domain architecture, BPL/LPL catalytic spans 31-246 (GLIPPVIRFY…GFAKSLQIEL (216 aa)). Cysteine 148 serves as the catalytic Acyl-thioester intermediate.

This sequence belongs to the octanoyltransferase LipM family. As to quaternary structure, monomer.

It catalyses the reaction octanoyl-[ACP] + L-lysyl-[protein] = N(6)-octanoyl-L-lysyl-[protein] + holo-[ACP] + H(+). The protein operates within protein modification; protein lipoylation via endogenous pathway; protein N(6)-(lipoyl)lysine from octanoyl-[acyl-carrier-protein]. Its function is as follows. Catalyzes the transfer of endogenously produced octanoic acid from octanoyl-acyl-carrier-protein onto the lipoyl domain of GcvH, an intermediate carrier during protein lipoylation. This Lysinibacillus sphaericus (strain C3-41) protein is Octanoyltransferase LipM.